A 333-amino-acid chain; its full sequence is Ketol-acid reductoisomerase (NADP(+)) (333 aa).

A KARI N-terminal Rossmann domain is found at Met1 to Thr171. Residues Tyr14–Gln17, Arg37, Thr42, and Asp72–Gln75 contribute to the NADP(+) site. Residue His97 is part of the active site. Residue Gly123 participates in NADP(+) binding. The KARI C-terminal knotted domain maps to Thr172–Leu317. Asp180, Glu184, Glu216, and Glu220 together coordinate Mg(2+). Ser241 contacts substrate.

This sequence belongs to the ketol-acid reductoisomerase family. Requires Mg(2+) as cofactor.

The catalysed reaction is (2R)-2,3-dihydroxy-3-methylbutanoate + NADP(+) = (2S)-2-acetolactate + NADPH + H(+). It carries out the reaction (2R,3R)-2,3-dihydroxy-3-methylpentanoate + NADP(+) = (S)-2-ethyl-2-hydroxy-3-oxobutanoate + NADPH + H(+). It participates in amino-acid biosynthesis; L-isoleucine biosynthesis; L-isoleucine from 2-oxobutanoate: step 2/4. It functions in the pathway amino-acid biosynthesis; L-valine biosynthesis; L-valine from pyruvate: step 2/4. Its function is as follows. Involved in the biosynthesis of branched-chain amino acids (BCAA). Catalyzes an alkyl-migration followed by a ketol-acid reduction of (S)-2-acetolactate (S2AL) to yield (R)-2,3-dihydroxy-isovalerate. In the isomerase reaction, S2AL is rearranged via a Mg-dependent methyl migration to produce 3-hydroxy-3-methyl-2-ketobutyrate (HMKB). In the reductase reaction, this 2-ketoacid undergoes a metal-dependent reduction by NADPH to yield (R)-2,3-dihydroxy-isovalerate. The polypeptide is Ketol-acid reductoisomerase (NADP(+)) (Xanthomonas campestris pv. campestris (strain 8004)).